A 592-amino-acid chain; its full sequence is 2-succinyl-5-enolpyruvyl-6-hydroxy-3-cyclohexene-1-carboxylate synthase (592 aa).

It belongs to the TPP enzyme family. MenD subfamily. As to quaternary structure, homodimer. It depends on Mg(2+) as a cofactor. Mn(2+) is required as a cofactor. Requires thiamine diphosphate as cofactor.

It carries out the reaction isochorismate + 2-oxoglutarate + H(+) = 5-enolpyruvoyl-6-hydroxy-2-succinyl-cyclohex-3-ene-1-carboxylate + CO2. The protein operates within quinol/quinone metabolism; 1,4-dihydroxy-2-naphthoate biosynthesis; 1,4-dihydroxy-2-naphthoate from chorismate: step 2/7. It participates in quinol/quinone metabolism; menaquinone biosynthesis. Its function is as follows. Catalyzes the thiamine diphosphate-dependent decarboxylation of 2-oxoglutarate and the subsequent addition of the resulting succinic semialdehyde-thiamine pyrophosphate anion to isochorismate to yield 2-succinyl-5-enolpyruvyl-6-hydroxy-3-cyclohexene-1-carboxylate (SEPHCHC). The polypeptide is 2-succinyl-5-enolpyruvyl-6-hydroxy-3-cyclohexene-1-carboxylate synthase (Leifsonia xyli subsp. xyli (strain CTCB07)).